We begin with the raw amino-acid sequence, 338 residues long: uncharacterized protein (338 aa).

Positions 1–20 are disordered; that stretch reads MYNNNQNHHNNDNNMNKDEP. Residues 9–20 are compositionally biased toward basic and acidic residues; sequence HNNDNNMNKDEP. 6 N-linked (GlcNAc...) asparagine glycosylation sites follow: Asn37, Asn83, Asn97, Asn105, Asn114, and Asn122. The disordered stretch occupies residues 55-92; sequence VNSGNNNNNNNNNNNNNNNNNNNNNNNNNDSIVINMDT. Positions 59-92 are enriched in low complexity; that stretch reads NNNNNNNNNNNNNNNNNNNNNNNNNDSIVINMDT. 3 consecutive transmembrane segments (helical) span residues 148–168, 178–198, and 202–222; these read YKKF…IVLI, FHAY…FLLI, and ILSI…FLKV. N-linked (GlcNAc...) asparagine glycosylation is found at Asn229, Asn240, Asn286, Asn302, Asn317, and Asn322. Disordered stretches follow at residues 279-303 and 316-338; these read SNLN…NSNS and LNSS…TNEE. Over residues 280–294 the composition is skewed to low complexity; the sequence is NLNRNNNNSNNVNNN. The span at 316 to 327 shows a compositional bias: low complexity; sequence LNSSGSNSSIYS. Residues 328–338 show a composition bias toward polar residues; the sequence is DVQNDIGTNEE.

The protein resides in the membrane. This is an uncharacterized protein from Dictyostelium discoideum (Social amoeba).